Here is a 158-residue protein sequence, read N- to C-terminus: Ribosome-binding factor A (158 aa).

The segment at 127–158 (RQGAVHAGDADPYKESAAEEPAAYEDDERRPD) is disordered. The span at 134–143 (GDADPYKESA) shows a compositional bias: basic and acidic residues.

This sequence belongs to the RbfA family. Monomer. Binds 30S ribosomal subunits, but not 50S ribosomal subunits or 70S ribosomes.

It localises to the cytoplasm. One of several proteins that assist in the late maturation steps of the functional core of the 30S ribosomal subunit. Associates with free 30S ribosomal subunits (but not with 30S subunits that are part of 70S ribosomes or polysomes). Required for efficient processing of 16S rRNA. May interact with the 5'-terminal helix region of 16S rRNA. The polypeptide is Ribosome-binding factor A (Mycobacteroides abscessus (strain ATCC 19977 / DSM 44196 / CCUG 20993 / CIP 104536 / JCM 13569 / NCTC 13031 / TMC 1543 / L948) (Mycobacterium abscessus)).